The following is a 501-amino-acid chain: COP9 signalosome complex subunit 3 (501 aa).

The PCI domain maps to 275–445; sequence RFEDALFLLE…VFWTELSPVP (171 aa).

Belongs to the CSN3 family. As to quaternary structure, component of the CSN complex, probably composed of csn-1, csn-2, csn-3, csn-4, csn-5, csn-6 and csn-7. Within the complex it probably interacts directly with csn-2 and csn-4. May interact with itself.

The protein resides in the cytoplasm. It is found in the nucleus. Its function is as follows. Component of the COP9 signalosome complex (CSN), a complex involved in various cellular and developmental processes. The CSN complex is an essential regulator of the ubiquitin (Ubl) conjugation pathway by mediating the deneddylation of the cullin subunits of the SCF-type E3 ligase complexes, leading to decrease the Ubl ligase activity of SCF. The CSN complex plays an essential role in embryogenesis and oogenesis and is required to regulate microtubule stability in the early embryo. Mediates mei-3/katanin targeting for degradation at the meiosis to mitosis transition via deneddylation of cul-3. This chain is COP9 signalosome complex subunit 3 (csn-3), found in Caenorhabditis elegans.